We begin with the raw amino-acid sequence, 168 residues long: G/U mismatch-specific DNA glycosylase (168 aa).

It belongs to the uracil-DNA glycosylase (UDG) superfamily. TDG/mug family. As to quaternary structure, binds DNA as a monomer.

Its subcellular location is the cytoplasm. The enzyme catalyses Specifically hydrolyzes mismatched double-stranded DNA and polynucleotides, releasing free uracil.. In terms of biological role, excises ethenocytosine and uracil, which can arise by alkylation or deamination of cytosine, respectively, from the corresponding mispairs with guanine in ds-DNA. It is capable of hydrolyzing the carbon-nitrogen bond between the sugar-phosphate backbone of the DNA and the mispaired base. The complementary strand guanine functions in substrate recognition. Required for DNA damage lesion repair in stationary-phase cells. In Escherichia coli O157:H7 (strain EC4115 / EHEC), this protein is G/U mismatch-specific DNA glycosylase.